The chain runs to 549 residues: Vacuolar fusion protein MON1 homolog A (549 aa).

Disordered regions lie at residues 1–90 and 109–137; these read MAAD…EQIS and EEMR…GKEE. Over residues 110–119 the composition is skewed to basic and acidic residues; the sequence is EMRQSQEGKL.

Belongs to the MON1/SAND family.

Plays an important role in membrane trafficking through the secretory apparatus. Not involved in endocytic trafficking to lysosomes. The chain is Vacuolar fusion protein MON1 homolog A (MON1A) from Gallus gallus (Chicken).